Reading from the N-terminus, the 24-residue chain is Antimicrobial peptide PGQ (24 aa).

The protein belongs to the gastrin/cholecystokinin family. Magainin subfamily. In terms of tissue distribution, is synthesized in the stomach and stored in a novel granular multinucleated cell in the gastric mucosa. It is stored as active, processed peptides in large granules within the granular gland secretions of the skin.

It is found in the secreted. Its function is as follows. Antimicrobial peptide. This Xenopus laevis (African clawed frog) protein is Antimicrobial peptide PGQ (pgq).